The primary structure comprises 765 residues: Dipeptidyl peptidase 4 (765 aa).

Over 1 to 6 (MKTPWK) the chain is Cytoplasmic. Residues 7–29 (VLLGLLGLAALITIITVPVVLLN) traverse the membrane as a helical; Signal-anchor for type II membrane protein segment. Residues 30-765 (KGNDAAADSR…HFIKQCFSLP (736 aa)) lie on the Extracellular side of the membrane. 9 N-linked (GlcNAc...) asparagine glycosylation sites follow: asparagine 84, asparagine 91, asparagine 149, asparagine 178, asparagine 228, asparagine 280, asparagine 320, asparagine 330, and asparagine 331. Intrachain disulfides connect cysteine 384–cysteine 393, cysteine 443–cysteine 446, and cysteine 453–cysteine 471. The N-linked (GlcNAc...) asparagine glycan is linked to asparagine 519. Residue serine 629 is the Charge relay system of the active site. Cysteine 648 and cysteine 761 form a disulfide bridge. N-linked (GlcNAc...) asparagine glycosylation is present at asparagine 684. Active-site charge relay system residues include aspartate 707 and histidine 739.

Belongs to the peptidase S9B family. DPPIV subfamily. In terms of assembly, monomer. Homodimer. Heterodimer with Seprase (FAP). Requires homodimerization for optimal dipeptidyl peptidase activity and T-cell costimulation. Found in a membrane raft complex, at least composed of BCL10, CARD11, DPP4 and IKBKB. Associates with collagen. Interacts with PTPRC; the interaction is enhanced in an interleukin-12-dependent manner in activated lymphocytes. Interacts (extracellular domain) with ADA; does not inhibit its dipeptidyl peptidase activity. Interacts with CAV1 (via the N-terminus); the interaction is direct. Interacts (via cytoplasmic tail) with CARD11 (via PDZ domain); its homodimerization is necessary for interaction with CARD11. Interacts with IGF2R; the interaction is direct. Interacts with GPC3. In terms of processing, the soluble form (Dipeptidyl peptidase 4 soluble form also named SDPP) derives from the membrane form (Dipeptidyl peptidase 4 membrane form also named MDPP) by proteolytic processing. N- and O-Glycosylated. Post-translationally, phosphorylated. Mannose 6-phosphate residues in the carbohydrate moiety are necessary for interaction with IGF2R in activated T-cells. Mannose 6-phosphorylation is induced during T-cell activation.

The protein resides in the secreted. It is found in the cell membrane. The protein localises to the apical cell membrane. It localises to the cell projection. Its subcellular location is the invadopodium membrane. The protein resides in the lamellipodium membrane. It is found in the cell junction. The protein localises to the membrane raft. It carries out the reaction Release of an N-terminal dipeptide, Xaa-Yaa-|-Zaa-, from a polypeptide, preferentially when Yaa is Pro, provided Zaa is neither Pro nor hydroxyproline.. Inhibited by GPC3 and diprotin A. Its function is as follows. Cell surface glycoprotein receptor involved in the costimulatory signal essential for T-cell receptor (TCR)-mediated T-cell activation. Acts as a positive regulator of T-cell coactivation, by binding at least ADA, CAV1, IGF2R, and PTPRC. Its binding to CAV1 and CARD11 induces T-cell proliferation and NF-kappa-B activation in a T-cell receptor/CD3-dependent manner. Its interaction with ADA also regulates lymphocyte-epithelial cell adhesion. In association with FAP is involved in the pericellular proteolysis of the extracellular matrix (ECM), the migration and invasion of endothelial cells into the ECM. May be involved in the promotion of lymphatic endothelial cells adhesion, migration and tube formation. When overexpressed, enhanced cell proliferation, a process inhibited by GPC3. Also acts as a serine exopeptidase with a dipeptidyl peptidase activity that regulates various physiological processes by cleaving peptides in the circulation, including many chemokines, mitogenic growth factors, neuropeptides and peptide hormones. Removes N-terminal dipeptides sequentially from polypeptides having unsubstituted N-termini provided that the penultimate residue is proline. In Felis catus (Cat), this protein is Dipeptidyl peptidase 4 (DPP4).